We begin with the raw amino-acid sequence, 86 residues long: MAHKKAGGSSRNGRDSESKRLGVKVYGGQAILAGGIIVRQRGTRMHPGENVGIGKDHTLFALTDGHVKFTTKGAGKKHMVNVVPAV.

The disordered stretch occupies residues 1 to 20 (MAHKKAGGSSRNGRDSESKR).

It belongs to the bacterial ribosomal protein bL27 family.

The protein is Large ribosomal subunit protein bL27 of Paraburkholderia phymatum (strain DSM 17167 / CIP 108236 / LMG 21445 / STM815) (Burkholderia phymatum).